Reading from the N-terminus, the 246-residue chain is Probable transcriptional regulatory protein YebC (246 aa).

The interval 1–20 (MAGHSKWANTRHRKAAQDAK) is disordered.

Belongs to the TACO1 family.

It localises to the cytoplasm. In Salmonella choleraesuis (strain SC-B67), this protein is Probable transcriptional regulatory protein YebC.